The sequence spans 397 residues: Acetate kinase (397 aa).

Asparagine 8 contacts Mg(2+). ATP is bound at residue lysine 15. Arginine 89 contributes to the substrate binding site. Residue aspartate 146 is the Proton donor/acceptor of the active site. ATP-binding positions include 206 to 210 (HVGNG), 283 to 285 (DMR), and 331 to 335 (GMGEN). Glutamate 383 is a Mg(2+) binding site.

The protein belongs to the acetokinase family. In terms of assembly, homodimer. It depends on Mg(2+) as a cofactor. Mn(2+) serves as cofactor.

The protein localises to the cytoplasm. The enzyme catalyses acetate + ATP = acetyl phosphate + ADP. The protein operates within metabolic intermediate biosynthesis; acetyl-CoA biosynthesis; acetyl-CoA from acetate: step 1/2. Its function is as follows. Catalyzes the formation of acetyl phosphate from acetate and ATP. Can also catalyze the reverse reaction. The sequence is that of Acetate kinase from Streptococcus agalactiae serotype III (strain NEM316).